Consider the following 714-residue polypeptide: Fumarate reductase flavoprotein subunit (714 aa).

Residues 13 to 16 (GGLA), 42 to 44 (SHS), and 49 to 50 (GG) contribute to the FAD site. His-43 bears the Tele-8alpha-FAD histidine mark. Active-site residues include His-257 and Arg-273. FAD is bound by residues Glu-420 and 436 to 437 (SV).

This sequence belongs to the FAD-dependent oxidoreductase 2 family. FRD/SDH subfamily. As to quaternary structure, part of an enzyme complex containing three subunits: a flavoprotein (frdA), an iron-sulfur protein (frdB), and diheme cytochrome b (frdC). It depends on FAD as a cofactor.

The protein localises to the cell inner membrane. The catalysed reaction is a quinone + succinate = fumarate + a quinol. In terms of biological role, the fumarate reductase enzyme complex is required for fumarate respiration. In Helicobacter pylori (strain ATCC 700392 / 26695) (Campylobacter pylori), this protein is Fumarate reductase flavoprotein subunit (frdA).